The sequence spans 752 residues: MAEPASVTVTFDDVALYFSEQEWEILEKWQKQMYKQEMKTNYETLDSLGYAFSKPDLITWMEQGRMLLISEQGCLDKTRRTTSPPTDEQLNMKNTGKLLCFDDEGTPRTKEEDCRLNGPQKQDLCAALRGKERKILLAQTATFQSPSLRETEILNKKVSITAYDPDKKDLRHKPRETPGRLEIPTGPRCYSCYVCRKVFQVRRDLLKHKRSHSKSQLCRYPKYKNSSRGKSELRRTQRLLCQKKRFQCSECEKSYFLKGSLVTHQVVHTGQRPYPCPECDKTFRYRANLKKHLCLHRGERPFCCGECGRAFVQQCELTEHLRLHSGEKPFQCPQCDRCFRLKRGMKVHLTQHSGKRPFHCPECGRSFSRKAALKTHQRTHSEEKPFSCGECGRKFIYKIKLDEHIRVHTGEKPFSCPECNKSFRLKRSLKAHGLQHIGKRPFQCPECSRGFFWRNAMRAHQRLHSEQKPFPCAECGKRFTRPSKLACHTRVHDRQKEFPCGECKKTFSQQSRLTQHLKVHTTEKPFSCAECGRSFRRRAHLTEHTRLHSGEEPFQCPECDKSFSWKASMKFHQRMHRDEKPFACGECDKTYTHQSQLTEHLRLHSGEKPYQCPECEKTFRLKGNLKSHLLQHSGQKPFSCVMCGKSFTQQYRLTEHIRVHSGEKPFQCPECDKSYCIRGSLKVHLYKHSGERPFQCPECGKGFLQKRSLKAHLCLHSGERPFSCDECGRSFTYVGALKTHIAVHAKEKPSSL.

Positions 9–80 (VTFDDVALYF…EQGCLDKTRR (72 aa)) constitute a KRAB domain. 19 consecutive C2H2-type zinc fingers follow at residues 190–212 (YSCY…KRSH), 246–268 (FQCS…QVVH), 274–296 (YPCP…LCLH), 302–324 (FCCG…LRLH), 330–352 (FQCP…LTQH), 358–380 (FHCP…QRTH), 386–408 (FSCG…IRVH), 414–436 (FSCP…GLQH), 442–464 (FQCP…QRLH), 470–492 (FPCA…TRVH), 498–520 (FPCG…LKVH), 526–548 (FSCA…TRLH), 554–576 (FQCP…QRMH), 582–604 (FACG…LRLH), 610–632 (YQCP…LLQH), 638–660 (FSCV…IRVH), 666–688 (FQCP…LYKH), 694–716 (FQCP…LCLH), and 722–744 (FSCD…IAVH).

This sequence belongs to the krueppel C2H2-type zinc-finger protein family.

It is found in the nucleus. The protein resides in the cytoplasm. Acts as a transcriptional repressor. The chain is Zinc finger protein 425 (ZNF425) from Homo sapiens (Human).